The following is a 116-amino-acid chain: Iron-sulfur cluster insertion protein ErpA (116 aa).

Iron-sulfur cluster contacts are provided by cysteine 44, cysteine 108, and cysteine 110.

This sequence belongs to the HesB/IscA family. In terms of assembly, homodimer. The cofactor is iron-sulfur cluster.

Required for insertion of 4Fe-4S clusters for at least IspG. The sequence is that of Iron-sulfur cluster insertion protein ErpA from Aeromonas hydrophila subsp. hydrophila (strain ATCC 7966 / DSM 30187 / BCRC 13018 / CCUG 14551 / JCM 1027 / KCTC 2358 / NCIMB 9240 / NCTC 8049).